The following is a 252-amino-acid chain: Major prion protein (252 aa).

Residues 1–22 form the signal peptide; that stretch reads MANLGCWMLFLFVATWSDLGLC. The interval 23-38 is interaction with ADGRG6; sequence KKRPKPGGWNTGGSRY. The tract at residues 23–229 is interaction with GRB2, ERI3 and SYN1; it reads KKRPKPGGWN…ESQAYYQRGS (207 aa). The disordered stretch occupies residues 26-106; the sequence is PKPGGWNTGG…QWNKPSKPKT (81 aa). Tandem repeats lie at residues 51–58, 59–66, 67–74, 75–82, and 83–90. The 5 X 8 AA tandem repeats of P-H-G-G-G-W-G-Q stretch occupies residues 51-90; it reads PQGGGWGQPHGGGWGQPHGGGWGQPHGGGWGQPHGGGWGQ. Gly residues predominate over residues 52–94; that stretch reads QGGGWGQPHGGGWGQPHGGGWGQPHGGGWGQPHGGGWGQGGGT. 12 residues coordinate Cu(2+): His-60, Gly-61, Gly-62, His-68, Gly-69, Gly-70, His-76, Gly-77, Gly-78, His-84, Gly-85, and Gly-86. Cys-178 and Cys-213 form a disulfide bridge. N-linked (GlcNAc...) asparagine glycans are attached at residues Asn-180 and Asn-196. Ser-229 carries the GPI-anchor amidated serine lipid modification. The propeptide at 230-252 is removed in mature form; the sequence is SMVLFSSPPVILLISFLIFLIVG.

Belongs to the prion family. As to quaternary structure, monomer and homodimer. Has a tendency to aggregate into amyloid fibrils containing a cross-beta spine, formed by a steric zipper of superposed beta-strands. Soluble oligomers may represent an intermediate stage on the path to fibril formation. Copper binding may promote oligomerization. Interacts with GRB2, APP, ERI3/PRNPIP and SYN1. Mislocalized cytosolically exposed PrP interacts with MGRN1; this interaction alters MGRN1 subcellular location and causes lysosomal enlargement. Interacts with APP. Interacts with KIAA1191. Interacts with ADGRG6.

It localises to the cell membrane. The protein localises to the golgi apparatus. In terms of biological role, its primary physiological function is unclear. May play a role in neuronal development and synaptic plasticity. May be required for neuronal myelin sheath maintenance. May promote myelin homeostasis through acting as an agonist for ADGRG6 receptor. May play a role in iron uptake and iron homeostasis. Soluble oligomers are toxic to cultured neuroblastoma cells and induce apoptosis (in vitro). Association with GPC1 (via its heparan sulfate chains) targets PRNP to lipid rafts. Also provides Cu(2+) or Zn(2+) for the ascorbate-mediated GPC1 deaminase degradation of its heparan sulfate side chains. This Callithrix jacchus (White-tufted-ear marmoset) protein is Major prion protein (PRNP).